Consider the following 335-residue polypeptide: Ketol-acid reductoisomerase (NADP(+)) (335 aa).

Residues 5–185 enclose the KARI N-terminal Rossmann domain; that stretch reads SKIYTDKDSN…GATRAGVIPT (181 aa). NADP(+) contacts are provided by residues 28 to 31, S56, and 86 to 89; these read YGSQ and DMVQ. H111 is a catalytic residue. Residue G137 coordinates NADP(+). The KARI C-terminal knotted domain occupies 186-331; sequence TFKEETETDL…NQLKDLIQKG (146 aa). Positions 194, 198, 230, and 234 each coordinate Mg(2+). A substrate-binding site is contributed by S255.

This sequence belongs to the ketol-acid reductoisomerase family. Mg(2+) serves as cofactor.

It carries out the reaction (2R)-2,3-dihydroxy-3-methylbutanoate + NADP(+) = (2S)-2-acetolactate + NADPH + H(+). The catalysed reaction is (2R,3R)-2,3-dihydroxy-3-methylpentanoate + NADP(+) = (S)-2-ethyl-2-hydroxy-3-oxobutanoate + NADPH + H(+). It participates in amino-acid biosynthesis; L-isoleucine biosynthesis; L-isoleucine from 2-oxobutanoate: step 2/4. It functions in the pathway amino-acid biosynthesis; L-valine biosynthesis; L-valine from pyruvate: step 2/4. Involved in the biosynthesis of branched-chain amino acids (BCAA). Catalyzes an alkyl-migration followed by a ketol-acid reduction of (S)-2-acetolactate (S2AL) to yield (R)-2,3-dihydroxy-isovalerate. In the isomerase reaction, S2AL is rearranged via a Mg-dependent methyl migration to produce 3-hydroxy-3-methyl-2-ketobutyrate (HMKB). In the reductase reaction, this 2-ketoacid undergoes a metal-dependent reduction by NADPH to yield (R)-2,3-dihydroxy-isovalerate. The polypeptide is Ketol-acid reductoisomerase (NADP(+)) (Saccharolobus islandicus (strain Y.G.57.14 / Yellowstone #1) (Sulfolobus islandicus)).